A 174-amino-acid chain; its full sequence is Interleukin-1 receptor antagonist protein (174 aa).

Positions 1–23 are cleaved as a signal peptide; that stretch reads MDIYIHGYLICLLLFLFRSETAC. Cys-89 and Cys-139 form a disulfide bridge. Asn-107 carries an N-linked (GlcNAc...) asparagine glycan.

It belongs to the IL-1 family.

The protein resides in the secreted. In terms of biological role, anti-inflammatory antagonist of interleukin-1 family of proinflammatory cytokines such as interleukin-1beta/IL1B and interleukin-1alpha/IL1A. Protects from immune dysregulation and uncontrolled systemic inflammation triggered by IL1 for a range of innate stimulatory agents such as pathogens. This is Interleukin-1 receptor antagonist protein (IL1RN) from Bos taurus (Bovine).